Consider the following 309-residue polypeptide: Zinc finger CCCH domain-containing protein 31 (309 aa).

Residues 1–36 (MEGAGAARKRSRPDTANGGAAGGKRSRETESFQTGL) form a disordered region. 2 C3H1-type zinc fingers span residues 37–65 (SSKL…HFVP) and 103–131 (SGKT…HGER). The interval 86 to 106 (ARAPMDHAAGGNSHPASSGKT) is disordered. A KH domain is found at 175-239 (SATAKISVDA…DQIKQASNMV (65 aa)). The tract at residues 249-273 (STPAKKPAGSAAGAAPAGRGGPGGR) is disordered. Low complexity predominate over residues 251–265 (PAKKPAGSAAGAAPA). A C3H1-type 3 zinc finger spans residues 275–302 (NYKTKLCENFVKGTCTFGDRCHFAHGEN).

The polypeptide is Zinc finger CCCH domain-containing protein 31 (Oryza sativa subsp. japonica (Rice)).